Consider the following 210-residue polypeptide: Glutathione S-transferase mdpJ (210 aa).

Positions 2 to 83 (SFGTLYTHNP…YCNDERSSLR (82 aa)) constitute a GST N-terminal domain. In terms of domain architecture, GST C-terminal spans 77-200 (DERSSLRILQ…VAGGVPDLGL (124 aa)).

It belongs to the GST superfamily.

It functions in the pathway secondary metabolite biosynthesis. Its function is as follows. Glutathione S-transferase; part of the gene cluster that mediates the biosynthesis of monodictyphenone, a prenyl xanthone derivative. The pathway begins with the synthesis of atrochrysone thioester by the polyketide synthase (PKS) mdpG. The atrochrysone carboxyl ACP thioesterase mdpF then breaks the thioester bond and releases the atrochrysone carboxylic acid from mdpG. The atrochrysone carboxylic acid is then converted to atrochrysone which is further transformed into emodin anthrone. The next step is performed by the anthrone oxygenase mdpH that catalyzes the oxidation of emodinanthrone to emodin. Emodin is further modified to yield monodictyphenone via several steps involving mdpB, mdpC mdpJ, mdpK and mdpL. These enzymes with xptA, xptB and xptC are also proposed to be involved in the synthesis of shamixanthone from emodin. Especially, direct reduction of emodin by the short chain dehydrogenase mdpC followed by dehydration catalyzed by the scytalone dehydratase-like protein mdpB gives loss of oxygen and formation of chrysophanol intermediate in two simple steps. The chain is Glutathione S-transferase mdpJ from Emericella nidulans (strain FGSC A4 / ATCC 38163 / CBS 112.46 / NRRL 194 / M139) (Aspergillus nidulans).